The chain runs to 171 residues: Peptide deformylase (171 aa).

Residues Cys91 and His133 each contribute to the Fe cation site. Residue Glu134 is part of the active site. His137 contacts Fe cation.

It belongs to the polypeptide deformylase family. Fe(2+) is required as a cofactor.

It catalyses the reaction N-terminal N-formyl-L-methionyl-[peptide] + H2O = N-terminal L-methionyl-[peptide] + formate. Its function is as follows. Removes the formyl group from the N-terminal Met of newly synthesized proteins. Requires at least a dipeptide for an efficient rate of reaction. N-terminal L-methionine is a prerequisite for activity but the enzyme has broad specificity at other positions. The sequence is that of Peptide deformylase from Sodalis glossinidius (strain morsitans).